Here is a 294-residue protein sequence, read N- to C-terminus: ATP synthase gamma chain (294 aa).

The protein belongs to the ATPase gamma chain family. As to quaternary structure, F-type ATPases have 2 components, CF(1) - the catalytic core - and CF(0) - the membrane proton channel. CF(1) has five subunits: alpha(3), beta(3), gamma(1), delta(1), epsilon(1). CF(0) has three main subunits: a, b and c.

It is found in the cell inner membrane. Its function is as follows. Produces ATP from ADP in the presence of a proton gradient across the membrane. The gamma chain is believed to be important in regulating ATPase activity and the flow of protons through the CF(0) complex. In Paraburkholderia xenovorans (strain LB400), this protein is ATP synthase gamma chain.